A 357-amino-acid polypeptide reads, in one-letter code: UDP-N-acetylglucosamine--N-acetylmuramyl-(pentapeptide) pyrophosphoryl-undecaprenol N-acetylglucosamine transferase (357 aa).

Residues 13-15 (SAG), Arg166, Ser197, and Gln292 contribute to the UDP-N-acetyl-alpha-D-glucosamine site.

It belongs to the glycosyltransferase 28 family. MurG subfamily.

Its subcellular location is the cell membrane. It catalyses the reaction di-trans,octa-cis-undecaprenyl diphospho-N-acetyl-alpha-D-muramoyl-L-alanyl-D-glutamyl-meso-2,6-diaminopimeloyl-D-alanyl-D-alanine + UDP-N-acetyl-alpha-D-glucosamine = di-trans,octa-cis-undecaprenyl diphospho-[N-acetyl-alpha-D-glucosaminyl-(1-&gt;4)]-N-acetyl-alpha-D-muramoyl-L-alanyl-D-glutamyl-meso-2,6-diaminopimeloyl-D-alanyl-D-alanine + UDP + H(+). It participates in cell wall biogenesis; peptidoglycan biosynthesis. In terms of biological role, cell wall formation. Catalyzes the transfer of a GlcNAc subunit on undecaprenyl-pyrophosphoryl-MurNAc-pentapeptide (lipid intermediate I) to form undecaprenyl-pyrophosphoryl-MurNAc-(pentapeptide)GlcNAc (lipid intermediate II). This Clostridium novyi (strain NT) protein is UDP-N-acetylglucosamine--N-acetylmuramyl-(pentapeptide) pyrophosphoryl-undecaprenol N-acetylglucosamine transferase.